Reading from the N-terminus, the 280-residue chain is Bis(5'-nucleosyl)-tetraphosphatase, symmetrical (280 aa).

The protein belongs to the Ap4A hydrolase family.

The enzyme catalyses P(1),P(4)-bis(5'-adenosyl) tetraphosphate + H2O = 2 ADP + 2 H(+). Hydrolyzes diadenosine 5',5'''-P1,P4-tetraphosphate to yield ADP. This chain is Bis(5'-nucleosyl)-tetraphosphatase, symmetrical, found in Shigella boydii serotype 18 (strain CDC 3083-94 / BS512).